The sequence spans 366 residues: Transmembrane protein 26 (366 aa).

3 consecutive transmembrane segments (helical) span residues 4-24 (LVLLKALVTRLLFLLHSLVAV), 36-56 (YWLLALLNLLLVLETVLTLKF), and 64-84 (WLSPAIFVYLVNIMPSLWLLE). Asparagine 110 is a glycosylation site (N-linked (GlcNAc...) asparagine). The next 5 helical transmembrane spans lie at 138–158 (MVCEPVWTLGLHQTLLLILII), 176–196 (ELLLMFVGTAADILEFTTETL), 208–228 (VSGILVVWTWSMLQFPLDLAV), 258–278 (IGLSFFIQDGPFLVVRLVLMI), and 282–302 (VINHMLVFFAVKNSLVMALHF). Over residues 319-329 (HPESPKPEHSG) the composition is skewed to basic and acidic residues. Positions 319-366 (HPESPKPEHSGPDQPSESGPSEWEDASPEALPLRTSPVTSEESYPTTP) are disordered. The segment covering 354-366 (SPVTSEESYPTTP) has biased composition (polar residues).

The protein resides in the membrane. The chain is Transmembrane protein 26 (Tmem26) from Mus musculus (Mouse).